The chain runs to 150 residues: Small ribosomal subunit protein uS11x (150 aa).

This sequence belongs to the universal ribosomal protein uS11 family.

Its subcellular location is the cytoplasm. The polypeptide is Small ribosomal subunit protein uS11x (RPS14C) (Arabidopsis thaliana (Mouse-ear cress)).